A 390-amino-acid polypeptide reads, in one-letter code: 8-amino-7-oxononanoate synthase (390 aa).

Arginine 19 is a binding site for substrate. 106–107 contacts pyridoxal 5'-phosphate; the sequence is GY. Histidine 131 is a substrate binding site. Pyridoxal 5'-phosphate is bound by residues serine 176, histidine 204, and threonine 233. Lysine 236 carries the N6-(pyridoxal phosphate)lysine modification. Position 350 (threonine 350) interacts with substrate.

Belongs to the class-II pyridoxal-phosphate-dependent aminotransferase family. BioF subfamily. As to quaternary structure, homodimer. It depends on pyridoxal 5'-phosphate as a cofactor.

It carries out the reaction 6-carboxyhexanoyl-[ACP] + L-alanine + H(+) = (8S)-8-amino-7-oxononanoate + holo-[ACP] + CO2. The protein operates within cofactor biosynthesis; biotin biosynthesis. In terms of biological role, catalyzes the decarboxylative condensation of pimeloyl-[acyl-carrier protein] and L-alanine to produce 8-amino-7-oxononanoate (AON), [acyl-carrier protein], and carbon dioxide. This chain is 8-amino-7-oxononanoate synthase, found in Pseudomonas entomophila (strain L48).